Reading from the N-terminus, the 307-residue chain is Isethionate sulfite-lyase activating enzyme (307 aa).

In terms of domain architecture, Radical SAM core spans 22–307 (HDGPGIRTVV…EAVVAQTADS (286 aa)). Positions 36, 40, 43, 62, 68, 71, 75, 95, 98, 102, and 106 each coordinate [4Fe-4S] cluster. 42–44 (WCS) lines the S-adenosyl-L-methionine pocket. 4Fe-4S ferredoxin-type domains follow at residues 53–85 (VELAYNTGRCLTLAKCVRCVEICTAGAISRAED) and 86–117 (DTISIDRALCNDCEQLCSGACPSNALITYGAH). Residues Gly-146, 195–197 (DIK), and His-268 contribute to the S-adenosyl-L-methionine site.

The protein belongs to the organic radical-activating enzymes family. In terms of assembly, monomer. The cofactor is [4Fe-4S] cluster.

It catalyses the reaction glycyl-[protein] + reduced [flavodoxin] + S-adenosyl-L-methionine = glycin-2-yl radical-[protein] + semiquinone [flavodoxin] + 5'-deoxyadenosine + L-methionine + H(+). Its pathway is organosulfur degradation; alkanesulfonate degradation. Involved in an anaerobic respiration pathway that converts the sulfonate isethionate (2-hydroxyethanesulfonate) to ammonia, acetate and sulfide. Catalyzes activation of the isethionate sulfite-lyase IseG under anaerobic conditions by generation of an organic free radical on a glycine residue, via a homolytic cleavage of S-adenosyl-L-methionine (SAM). This is Isethionate sulfite-lyase activating enzyme from Nitratidesulfovibrio vulgaris (strain ATCC 29579 / DSM 644 / CCUG 34227 / NCIMB 8303 / VKM B-1760 / Hildenborough) (Desulfovibrio vulgaris).